The following is a 565-amino-acid chain: NAD-dependent malic enzyme (565 aa).

Y104 (proton donor) is an active-site residue. R157 is an NAD(+) binding site. K175 acts as the Proton acceptor in catalysis. Residues E246, D247, and D270 each coordinate a divalent metal cation. Residues D270 and N418 each contribute to the NAD(+) site.

This sequence belongs to the malic enzymes family. As to quaternary structure, homotetramer. Mg(2+) is required as a cofactor. The cofactor is Mn(2+).

It carries out the reaction (S)-malate + NAD(+) = pyruvate + CO2 + NADH. It catalyses the reaction oxaloacetate + H(+) = pyruvate + CO2. This chain is NAD-dependent malic enzyme, found in Shigella sonnei (strain Ss046).